Here is a 196-residue protein sequence, read N- to C-terminus: Ribonuclease HII (196 aa).

The 188-residue stretch at 9 to 196 folds into the RNase H type-2 domain; it reads GLVCGIDEAG…GPVARQLSLL (188 aa). Aspartate 15, glutamate 16, and aspartate 107 together coordinate a divalent metal cation.

This sequence belongs to the RNase HII family. Mn(2+) is required as a cofactor. Requires Mg(2+) as cofactor.

It localises to the cytoplasm. It carries out the reaction Endonucleolytic cleavage to 5'-phosphomonoester.. Its function is as follows. Endonuclease that specifically degrades the RNA of RNA-DNA hybrids. This is Ribonuclease HII from Dechloromonas aromatica (strain RCB).